The following is a 292-amino-acid chain: Glyoxylase B2 (292 aa).

H72, H74, D76, H77, H148, and D166 together coordinate Zn(2+). Substrate contacts are provided by residues T175–P181, H208–Y210, and K284–L287. Residue H208 coordinates Zn(2+).

It belongs to the metallo-beta-lactamase superfamily. Glyoxalase II family. The cofactor is Zn(2+).

In Dictyostelium discoideum (Social amoeba), this protein is Glyoxylase B2 (gloB2).